The following is a 102-amino-acid chain: Urease subunit beta (102 aa).

The protein belongs to the urease beta subunit family. Heterotrimer of UreA (gamma), UreB (beta) and UreC (alpha) subunits. Three heterotrimers associate to form the active enzyme.

It localises to the cytoplasm. The catalysed reaction is urea + 2 H2O + H(+) = hydrogencarbonate + 2 NH4(+). The protein operates within nitrogen metabolism; urea degradation; CO(2) and NH(3) from urea (urease route): step 1/1. The sequence is that of Urease subunit beta from Pseudomonas syringae pv. tomato (strain ATCC BAA-871 / DC3000).